A 590-amino-acid polypeptide reads, in one-letter code: Acyl-CoA ligase sidI (590 aa).

The short motif at 6 to 14 (RLQQTLSHL) is the PTS2-type peroxisomal targeting signal element. ATP is bound by residues 220–228 (TSGSTGNPK), 359–364 (SSYGLT), aspartate 449, and arginine 464. Threonine 364 lines the substrate pocket. CoA is bound by residues 472–474 (GGE) and 543–545 (YFF). Lysine 563 is an ATP binding site.

Belongs to the ATP-dependent AMP-binding enzyme family.

The protein resides in the peroxisome. It participates in siderophore biosynthesis. Acyl-CoA ligase; part of the siderophore biosynthetic pathway. Aspergillus fumigatus produces 4 types of siderophores, low-molecular-mass iron chelators, including excreted fusarinine C (FsC) and triacetylfusarinine C (TAFC) for iron uptake and intacellular ferricrocin (FC) for hyphal and hydroxyferricrocin (HFC) for conidial iron distribution and storage. TAFC consists of 3 N(2)-acetyl-N(5)-anhydromevalonyl-N(5)-hydroxyornithine residues cyclically linked by ester bonds; FC is a cyclic hexapeptide with the structure Gly-Ser-Gly-(N(5)-acetyl-N(5)-hydroxyornithine)x3. The biosynthesis of all four siderophores depends on the hydroxylation of ornithine, catalyzed by the monooxygenase sidA. Subsequently, the pathways for biosynthesis of extra- and intracellular siderophores split. For biosynthesis of extracellular siderophores, the transacylase sidF transfers anhydromevalonyl to N(5)-hydroxyornithine. The required anhydromevalonyl-CoA moiety is derived from mevalonate by CoA ligation and dehydration catalyzed by sidI and sidH respectively. The acetylation of N(5)-hydroxyornithine for FC biosynthesis involves the constitutively expressed sidL. FC is hydroxylated to HFC by an as yet uncharacterized enzyme during conidiation. Assembly of fusarinine C (FsC) and FC is catalyzed by two different nonribosomal peptide synthetases (NRPS), sidD and sidC respectively. Subsequently, sidG catalyzes N2-acetylation of FsC for forming TAFC. Both extra- and intracellular siderophores are crucial for growth during iron limitation and virulence. The sequence is that of Acyl-CoA ligase sidI from Aspergillus fumigatus (strain ATCC MYA-4609 / CBS 101355 / FGSC A1100 / Af293) (Neosartorya fumigata).